Reading from the N-terminus, the 408-residue chain is Arginine biosynthesis bifunctional protein ArgJ 1 (408 aa).

Substrate contacts are provided by threonine 154, lysine 180, threonine 191, glutamate 277, asparagine 403, and serine 408. Residue threonine 191 is the Nucleophile of the active site.

Belongs to the ArgJ family. In terms of assembly, heterotetramer of two alpha and two beta chains.

The protein localises to the cytoplasm. It catalyses the reaction N(2)-acetyl-L-ornithine + L-glutamate = N-acetyl-L-glutamate + L-ornithine. The catalysed reaction is L-glutamate + acetyl-CoA = N-acetyl-L-glutamate + CoA + H(+). The protein operates within amino-acid biosynthesis; L-arginine biosynthesis; L-ornithine and N-acetyl-L-glutamate from L-glutamate and N(2)-acetyl-L-ornithine (cyclic): step 1/1. It functions in the pathway amino-acid biosynthesis; L-arginine biosynthesis; N(2)-acetyl-L-ornithine from L-glutamate: step 1/4. Functionally, catalyzes two activities which are involved in the cyclic version of arginine biosynthesis: the synthesis of N-acetylglutamate from glutamate and acetyl-CoA as the acetyl donor, and of ornithine by transacetylation between N(2)-acetylornithine and glutamate. The protein is Arginine biosynthesis bifunctional protein ArgJ 1 of Clostridium acetobutylicum (strain ATCC 824 / DSM 792 / JCM 1419 / IAM 19013 / LMG 5710 / NBRC 13948 / NRRL B-527 / VKM B-1787 / 2291 / W).